Here is a 354-residue protein sequence, read N- to C-terminus: MASNKAMFTNDVPQDRLLAVEKIESLRKPAKVMIIGDVDTGKTTLTIYLANELLSRGFRVAIIDSDIGQKGILPPATISLAFVDSHFTSLDDLKAFSHYFIGTITPNQYFGEMVVGVMKLSELAMKFSDVVLIDTTGMIYGSGVELKRMKIEAVKPNLILALERNNELAPILKGYEDITIRLEVSEKAKDFSRSERRELRREKWRKYFENSKIVNFNLDDVLVTGTSLFQGEEIGDTEKSLLERLFKWLIIHGRKIGNKYFVVKVDASEGPRIVDKNVVKYFDFSKLSNILLGLIDKQGFCIGLGILKSINFKEKKIEVLTPVEDLSSVAEIRFGRVRVREDGEELGLLDREAL.

36–43 serves as a coordination point for ATP; it reads GDVDTGKT.

Requires a divalent metal cation as cofactor.

It catalyses the reaction a 5'-end dephospho-2'-deoxyribonucleoside-DNA + ATP = a 5'-end 5'-phospho-2'-deoxyribonucleoside-DNA + ADP + H(+). The catalysed reaction is a 5'-end dephospho-ribonucleoside-RNA + ATP = a 5'-end 5'-phospho-ribonucleoside-RNA + ADP + H(+). Functionally, polynucleotide kinase that can phosphorylate the 5'-hydroxyl groups of both single-stranded RNA (ssRNA) and single-stranded DNA (ssDNA). Exhibits a strong preference for ssRNA. In Pyrococcus abyssi (strain GE5 / Orsay), this protein is Polyribonucleotide 5'-hydroxyl-kinase PYRAB01840.